Consider the following 703-residue polypeptide: Polyribonucleotide nucleotidyltransferase (703 aa).

Positions 485 and 491 each coordinate Mg(2+). In terms of domain architecture, KH spans 552-611 (PRIYTLKIDQDKIRDVIGKGGAMIRSITEASDTNIEIEDDGTIKIFATERAKADIAISKI). An S1 motif domain is found at 621 to 689 (GKTYEGKVTR…RQNRVRLSIK (69 aa)).

It belongs to the polyribonucleotide nucleotidyltransferase family. Component of the RNA degradosome, which is a multiprotein complex involved in RNA processing and mRNA degradation. It depends on Mg(2+) as a cofactor.

It localises to the cytoplasm. The enzyme catalyses RNA(n+1) + phosphate = RNA(n) + a ribonucleoside 5'-diphosphate. In terms of biological role, involved in mRNA degradation. Catalyzes the phosphorolysis of single-stranded polyribonucleotides processively in the 3'- to 5'-direction. The protein is Polyribonucleotide nucleotidyltransferase of Pseudoalteromonas atlantica (strain T6c / ATCC BAA-1087).